Consider the following 286-residue polypeptide: Phosphonates import ATP-binding protein PhnC (286 aa).

The ABC transporter domain occupies 3–246 (FHLKQVTRRF…AVTEIYGTDS (244 aa)). 35–42 (GRSGAGKS) is a binding site for ATP.

Belongs to the ABC transporter superfamily. Phosphonates importer (TC 3.A.1.9.1) family. In terms of assembly, the complex is composed of two ATP-binding proteins (PhnC), two transmembrane proteins (PhnE) and a solute-binding protein (PhnD).

It is found in the cell inner membrane. It carries out the reaction phosphonate(out) + ATP + H2O = phosphonate(in) + ADP + phosphate + H(+). Functionally, part of the ABC transporter complex PhnCDE involved in phosphonates import. Responsible for energy coupling to the transport system. This is Phosphonates import ATP-binding protein PhnC from Agrobacterium fabrum (strain C58 / ATCC 33970) (Agrobacterium tumefaciens (strain C58)).